Consider the following 382-residue polypeptide: Gap junction alpha-1 protein (382 aa).

At 2-23 (GDWSALGKLLDKVQAYSTAGGK) the chain is on the cytoplasmic side. Ser5 is subject to Phosphoserine. Residues 24–44 (VWLSVLFIFRILLLGTAVESA) traverse the membrane as a helical segment. Over 45–76 (WGDEQSAFRCNTQQPGCENVCYDKSFPISHVR) the chain is Extracellular. 2 disulfides stabilise this stretch: Cys54–Cys192 and Cys187–Cys198. Residues 77 to 97 (FWVLQIIFVSVPTLLYLAHVF) form a helical membrane-spanning segment. Topologically, residues 98 to 155 (YVMRKEEKLNKKEEELKVAQTDGANVDMHLKQIEIKKFKYGIEEHGKVKMRGGLLRTY) are cytoplasmic. Lys144 participates in a covalent cross-link: Glycyl lysine isopeptide (Lys-Gly) (interchain with G-Cter in SUMO). Residues 156 to 176 (IISILFKSVFEVAFLLIQWYI) form a helical membrane-spanning segment. At 177 to 207 (YGFSLSAVYTCKRDPCPHQVDCFLSRPTEKT) the chain is on the extracellular side. The helical transmembrane segment at 208–228 (IFIIFMLVVSLVSLALNIIEL) threads the bilayer. The Cytoplasmic segment spans residues 229 to 382 (FYVFFKGIKD…SRPRPDDLEI (154 aa)). Residue Lys237 forms a Glycyl lysine isopeptide (Lys-Gly) (interchain with G-Cter in SUMO) linkage. The interval 244 to 382 (SDLYHATTGP…SRPRPDDLEI (139 aa)) is interaction with NOV. Tyr247 is subject to Phosphotyrosine. Phosphoserine occurs at positions 255, 257, and 262. The interaction with UBQLN4 stretch occupies residues 264 to 382 (TYAYFNGCSS…SRPRPDDLEI (119 aa)). Cys271 bears the S-nitrosocysteine mark. Thr275 is modified (phosphothreonine). Residues Ser306 and Ser314 each carry the phosphoserine modification. The span at 317–332 (QNRMGQAGSTISNSHA) shows a compositional bias: polar residues. Residues 317–382 (QNRMGQAGST…SRPRPDDLEI (66 aa)) are disordered. Ser325 carries the phosphoserine; by CK1 modification. Thr326 carries the phosphothreonine modification. Residues Ser328 and Ser330 each carry the phosphoserine; by CK1 modification. A phosphoserine mark is found at Ser344 and Ser365. Residues 362 to 374 (RPSSRASSRASSR) are compositionally biased toward low complexity. Position 368 is a phosphoserine; by PKC/PRKCG and PKC/PRKCD (Ser368). Ser369 and Ser373 each carry phosphoserine.

The protein belongs to the connexin family. Alpha-type (group II) subfamily. In terms of assembly, a connexon is composed of a hexamer of connexins. Interacts with SGSM3. Interacts with RIC1/CIP150. Interacts with CNST and CSNK1D. Interacts (via C-terminus) with TJP1. Interacts (via C-terminus) with SRC (via SH3 domain). Interacts (not ubiquitinated) with UBQLN4 (via UBA domain). Interacts with NOV. Interacts with TMEM65. Interacts with ANK3/ANKG and PKP2. Post-translationally, phosphorylation at Ser-325, Ser-328 and Ser-330 by CK1 modulates gap junction assembly. Phosphorylated at Ser-368 by PRKCG; phosphorylation induces disassembly of gap junction plaques and inhibition of gap junction activity. Phosphorylation at Ser-368 by PRKCD triggers its internalization into small vesicles leading to proteasome-mediated degradation. In terms of processing, sumoylated with SUMO1, SUMO2 and SUMO3, which may regulate the level of functional Cx43 gap junctions at the plasma membrane. May be desumoylated by SENP1 or SENP2. S-nitrosylation at Cys-271 is enriched at the muscle endothelial gap junction in arteries, it augments channel permeability and may regulate of smooth muscle cell to endothelial cell communication. Post-translationally, acetylated in the developing cortex; leading to delocalization from the cell membrane.

The protein localises to the cell membrane. It localises to the cell junction. It is found in the gap junction. The protein resides in the endoplasmic reticulum. Functionally, gap junction protein that acts as a regulator of bladder capacity. A gap junction consists of a cluster of closely packed pairs of transmembrane channels, the connexons, through which materials of low MW diffuse from one cell to a neighboring cell. May play a critical role in the physiology of hearing by participating in the recycling of potassium to the cochlear endolymph. Negative regulator of bladder functional capacity: acts by enhancing intercellular electrical and chemical transmission, thus sensitizing bladder muscles to cholinergic neural stimuli and causing them to contract. May play a role in cell growth inhibition through the regulation of NOV expression and localization. Plays an essential role in gap junction communication in the ventricles. The sequence is that of Gap junction alpha-1 protein (GJA1) from Erinaceus europaeus (Western European hedgehog).